Reading from the N-terminus, the 248-residue chain is Small ribosomal subunit protein uS2 (248 aa).

This sequence belongs to the universal ribosomal protein uS2 family.

The polypeptide is Small ribosomal subunit protein uS2 (Alkalilimnicola ehrlichii (strain ATCC BAA-1101 / DSM 17681 / MLHE-1)).